Here is a 454-residue protein sequence, read N- to C-terminus: Neuronal acetylcholine receptor subunit alpha-5 (454 aa).

Residues 1 to 26 (MPLRARSRKPGAGPAARAPQAGVSEP) form a disordered region. Residues 1-29 (MPLRARSRKPGAGPAARAPQAGVSEPSFV) form the signal peptide. Over residues 10–22 (PGAGPAARAPQAG) the composition is skewed to low complexity. Topologically, residues 30–240 (AKSEDRLFKH…IIRRLPLFYT (211 aa)) are extracellular. N-linked (GlcNAc...) asparagine glycans are attached at residues N55, N169, and N215. C156 and C170 are joined by a disulfide. A disulfide bond links C220 and C221. A run of 3 helical transmembrane segments spans residues 241 to 261 (LFLI…FYLP), 270 to 290 (LCTS…EIIP), and 303 to 323 (LVFT…AINI). Residues 324–416 (HHRSSSTHNA…KFIAQVLDRM (93 aa)) lie on the Cytoplasmic side of the membrane. The chain crosses the membrane as a helical span at residues 417 to 437 (FLWAFLLVSIIGSLVLFIPVI). Residues 438–454 (HKWASIIVPVHIGSTNT) lie on the Extracellular side of the membrane.

This sequence belongs to the ligand-gated ion channel (TC 1.A.9) family. Acetylcholine receptor (TC 1.A.9.1) subfamily. Alpha-5/CHRNA5 sub-subfamily. As to quaternary structure, neuronal AChR that forms heteropentamers composed of two different type of subunits: alpha and non-alpha (beta). CHRNA5/alpha-5 subunit is only able to form functional nAChRs when co-assembled with another alpha subunit, can be combined to CHRNA4/alpha-4 or CHRNA3/alpha-3 and CHRNB4/beta-4 or CHRNB2/beta-2 to give rise to functional receptors. Interacts with LYPD6.

The protein localises to the synaptic cell membrane. The protein resides in the cell membrane. The enzyme catalyses Ca(2+)(in) = Ca(2+)(out). It carries out the reaction K(+)(in) = K(+)(out). The catalysed reaction is Na(+)(in) = Na(+)(out). Its activity is regulated as follows. Activated by a myriad of ligands such as acetylcholine, cytisine, nicotine, choline and epibatidine. Functionally, component of neuronal acetylcholine receptors (nAChRs) that function as pentameric, ligand-gated cation channels with high calcium permeability among other activities. nAChRs are excitatory neurotrasnmitter receptors formed by a collection of nAChR subunits known to mediate synaptic transmission in the nervous system and the neuromuscular junction. Each nAchR subunit confers differential attributes to channel properties, including activation, deactivation and desensitization kinetics, pH sensitivity, cation permeability, and binding to allosteric modulators. Has an accessory rather than functional role and is only able to form functional nAChRs when co-assembled with another beta subunit. Participates in pentameric assemblies along with CHRNA3, CHRNA4, CHRNB2 and CHRNB4. Increases receptor sensitivity to acetylcholine and nicotine when associated with CHRNA4 and CHRNB2. Plays a role in nicotine addiction. The chain is Neuronal acetylcholine receptor subunit alpha-5 (CHRNA5) from Gallus gallus (Chicken).